The following is a 354-amino-acid chain: Uroporphyrinogen decarboxylase (354 aa).

Residues Arg-27–Arg-31, Asp-77, Tyr-154, Thr-209, and His-327 contribute to the substrate site.

This sequence belongs to the uroporphyrinogen decarboxylase family. Homodimer.

The protein resides in the cytoplasm. The catalysed reaction is uroporphyrinogen III + 4 H(+) = coproporphyrinogen III + 4 CO2. It functions in the pathway porphyrin-containing compound metabolism; protoporphyrin-IX biosynthesis; coproporphyrinogen-III from 5-aminolevulinate: step 4/4. Functionally, catalyzes the decarboxylation of four acetate groups of uroporphyrinogen-III to yield coproporphyrinogen-III. In Escherichia coli O7:K1 (strain IAI39 / ExPEC), this protein is Uroporphyrinogen decarboxylase.